Reading from the N-terminus, the 263-residue chain is Pyridoxine 5'-phosphate synthase (263 aa).

Asn-15 serves as a coordination point for 3-amino-2-oxopropyl phosphate. 17–18 (DH) is a 1-deoxy-D-xylulose 5-phosphate binding site. Arg-26 contributes to the 3-amino-2-oxopropyl phosphate binding site. The active-site Proton acceptor is the His-51. Arg-53 and His-58 together coordinate 1-deoxy-D-xylulose 5-phosphate. The active-site Proton acceptor is Glu-78. Thr-108 contacts 1-deoxy-D-xylulose 5-phosphate. Catalysis depends on His-199, which acts as the Proton donor. 3-amino-2-oxopropyl phosphate contacts are provided by residues Gly-200 and 221–222 (GH).

It belongs to the PNP synthase family. In terms of assembly, homooctamer; tetramer of dimers.

The protein resides in the cytoplasm. The enzyme catalyses 3-amino-2-oxopropyl phosphate + 1-deoxy-D-xylulose 5-phosphate = pyridoxine 5'-phosphate + phosphate + 2 H2O + H(+). It functions in the pathway cofactor biosynthesis; pyridoxine 5'-phosphate biosynthesis; pyridoxine 5'-phosphate from D-erythrose 4-phosphate: step 5/5. In terms of biological role, catalyzes the complicated ring closure reaction between the two acyclic compounds 1-deoxy-D-xylulose-5-phosphate (DXP) and 3-amino-2-oxopropyl phosphate (1-amino-acetone-3-phosphate or AAP) to form pyridoxine 5'-phosphate (PNP) and inorganic phosphate. The polypeptide is Pyridoxine 5'-phosphate synthase (Ralstonia nicotianae (strain ATCC BAA-1114 / GMI1000) (Ralstonia solanacearum)).